The following is a 365-amino-acid chain: Centrosomal protein of 41 kDa B (365 aa).

The segment covering 1 to 14 (MSAKRSIGDPEILK) has biased composition (basic and acidic residues). Disordered regions lie at residues 1 to 23 (MSAKRSIGDPEILKKRIPQNQKY) and 104 to 123 (EFLTDRPNGKGSPVSESKSP). Residues 177–274 (EDCPFLLLDV…ISQKFPQGLT (98 aa)) enclose the Rhodanese domain. The disordered stretch occupies residues 329-365 (TSTPSRLRLDSRNSKVPSSASSARSLSSTSSHSKPWK). Residues 342-365 (SKVPSSASSARSLSSTSSHSKPWK) show a composition bias toward low complexity.

It belongs to the CEP41 family.

The protein localises to the cytoplasm. It is found in the cytoskeleton. It localises to the microtubule organizing center. Its subcellular location is the centrosome. The protein resides in the cell projection. The protein localises to the cilium. It is found in the cilium basal body. Required during ciliogenesis for tubulin glutamylation in cilium. Probably acts by participating in the transport of tubulin polyglutamylases between the basal body and the cilium. This chain is Centrosomal protein of 41 kDa B (cep41-b), found in Xenopus laevis (African clawed frog).